Reading from the N-terminus, the 175-residue chain is Large ribosomal subunit protein uL6 (175 aa).

The protein belongs to the universal ribosomal protein uL6 family. In terms of assembly, part of the 50S ribosomal subunit.

In terms of biological role, this protein binds to the 23S rRNA, and is important in its secondary structure. It is located near the subunit interface in the base of the L7/L12 stalk, and near the tRNA binding site of the peptidyltransferase center. This is Large ribosomal subunit protein uL6 from Xylella fastidiosa (strain M12).